A 571-amino-acid chain; its full sequence is Urease subunit alpha (571 aa).

Residues 133-571 enclose the Urease domain; sequence GGIDTHVHFI…LPLAQRYFLF (439 aa). Ni(2+) contacts are provided by His-138, His-140, and Lys-221. Lys-221 carries the N6-carboxylysine modification. Residue His-223 participates in substrate binding. Ni(2+) contacts are provided by His-250 and His-276. Residue His-324 is the Proton donor of the active site. Asp-364 is a Ni(2+) binding site.

Belongs to the metallo-dependent hydrolases superfamily. Urease alpha subunit family. Heterotrimer of UreA (gamma), UreB (beta) and UreC (alpha) subunits. Three heterotrimers associate to form the active enzyme. Requires Ni cation as cofactor. Carboxylation allows a single lysine to coordinate two nickel ions.

Its subcellular location is the cytoplasm. The enzyme catalyses urea + 2 H2O + H(+) = hydrogencarbonate + 2 NH4(+). The protein operates within nitrogen metabolism; urea degradation; CO(2) and NH(3) from urea (urease route): step 1/1. This Staphylococcus carnosus (strain TM300) protein is Urease subunit alpha.